The chain runs to 66 residues: Large ribosomal subunit protein bL33c (66 aa).

It belongs to the bacterial ribosomal protein bL33 family.

Its subcellular location is the plastid. The protein resides in the chloroplast. The sequence is that of Large ribosomal subunit protein bL33c from Barbarea verna (Land cress).